Here is a 126-residue protein sequence, read N- to C-terminus: Large ribosomal subunit protein bL12 (126 aa).

Belongs to the bacterial ribosomal protein bL12 family. Homodimer. Part of the ribosomal stalk of the 50S ribosomal subunit. Forms a multimeric L10(L12)X complex, where L10 forms an elongated spine to which 2 to 4 L12 dimers bind in a sequential fashion. Binds GTP-bound translation factors.

Functionally, forms part of the ribosomal stalk which helps the ribosome interact with GTP-bound translation factors. Is thus essential for accurate translation. The polypeptide is Large ribosomal subunit protein bL12 (Methylocella silvestris (strain DSM 15510 / CIP 108128 / LMG 27833 / NCIMB 13906 / BL2)).